A 166-amino-acid polypeptide reads, in one-letter code: Small ribosomal subunit protein uS5 (166 aa).

Positions 11–74 (LNEKLIAVNR…EKARRNMFTI (64 aa)) constitute an S5 DRBM domain.

The protein belongs to the universal ribosomal protein uS5 family. In terms of assembly, part of the 30S ribosomal subunit. Contacts proteins S4 and S8.

Functionally, with S4 and S12 plays an important role in translational accuracy. Located at the back of the 30S subunit body where it stabilizes the conformation of the head with respect to the body. This Aliivibrio salmonicida (strain LFI1238) (Vibrio salmonicida (strain LFI1238)) protein is Small ribosomal subunit protein uS5.